We begin with the raw amino-acid sequence, 632 residues long: MSSQEASKMLRTYNIAWWGNNYYDVNELGHISVCPDPDVPEARVDLAELVKAREAQGQRLPALFCFPQILQHRLRSINAAFKRARESYGYNGDYFLVYPIKVNQHRRVIESLIHSGEPLGLEAGSKAELMAVLAHAGMTRSVIVCNGYKDREYIRLALVGEKMGHKVYLVIEKMSEIAIVLEEAERLNVVPRLGVRARLASQGSGKWQSSGGEKSKFGLAATQVLQLVEILRAAGHLESLQLLHFHLGSQMANIRDIATGVRESARFYVELHKLGVNIQCFDVGGGLGVDYEGTRSQSDCSVNYGLNEYANNIIWAIGDACEENGLPHPTVITESGRAVTAHHTVLVSNIIGVERNEYTEATPPAEDAARPLQSMWETWLEMHETGNRRSLREWLHDSQMDLHDIHIGYSSGTFNLQERAWAEQLYLNMCHEVQKQLDPSNRAHRPIIDELQERMADKIYVNFSLFQSMPDAWGIDQLFPVMPLEGLNKSPERRAVLLDITCDSDGAIDHYVDGDGIATTMPMPEYDPENPPMLGFFMVGAYQEILGNMHNLFGDTEAVDVFVFPDGSVEVELSDEGDTVADMLQYVQLDPNTLLTQFRDQVKNTGLDDALQQQFLEEFEAGLYGYTYLEDE.

Lysine 101 carries the N6-(pyridoxal phosphate)lysine modification. 281–291 (FDVGGGLGVDY) contributes to the substrate binding site.

This sequence belongs to the Orn/Lys/Arg decarboxylase class-II family. SpeA subfamily. Requires Mg(2+) as cofactor. The cofactor is pyridoxal 5'-phosphate.

It carries out the reaction L-arginine + H(+) = agmatine + CO2. It functions in the pathway amine and polyamine biosynthesis; agmatine biosynthesis; agmatine from L-arginine: step 1/1. Functionally, catalyzes the biosynthesis of agmatine from arginine. The polypeptide is Biosynthetic arginine decarboxylase (Klebsiella pneumoniae (strain 342)).